Reading from the N-terminus, the 212-residue chain is Ribonuclease HII (212 aa).

Positions 4-206 constitute an RNase H type-2 domain; sequence EVQCGIDEAG…YKKIKEDVES (203 aa). Residues Asp-10, Glu-11, and Asp-103 each contribute to the a divalent metal cation site.

The protein belongs to the RNase HII family. Mn(2+) is required as a cofactor. Requires Mg(2+) as cofactor.

Its subcellular location is the cytoplasm. The catalysed reaction is Endonucleolytic cleavage to 5'-phosphomonoester.. In terms of biological role, endonuclease that specifically degrades the RNA of RNA-DNA hybrids. The polypeptide is Ribonuclease HII (Thermoplasma volcanium (strain ATCC 51530 / DSM 4299 / JCM 9571 / NBRC 15438 / GSS1)).